A 416-amino-acid polypeptide reads, in one-letter code: TNF receptor-associated factor 1 (416 aa).

The tract at residues 1–24 (MASSSGSSPRPAPDENEFPFGCPP) is disordered. Ser-146 bears the Phosphoserine mark. A coiled-coil region spans residues 182–264 (MKEKLLAELE…QSLRLMEEAS (83 aa)). Glycyl lysine isopeptide (Lys-Gly) (interchain with G-Cter in ubiquitin) cross-links involve residues Lys-185 and Lys-193. An MATH domain is found at 266-412 (DGTFLWKITN…DDTMFLKCIV (147 aa)).

As to quaternary structure, homotrimer. Heterotrimer with TRAF2. Interacts with TNFRSF1A/TNFR1, TNFRSF1B/TNFR2, TNFRSF4, TNFRSF5/CD40, TNFRSF8/CD30, TNFRSF9/CD137, TNFRSF11A/RANK, TNFRSF13C, TNFRSF18/AITR, TNFRSF17/BCMA, TNFRSF19/TROY, TNFRSF19L/RELT, XEDAR, EDAR, Epstein-Barr virus BNFL1/LMP-1, TANK/ITRAF, TRAIP and RIPK2. Interacts with BIRC2 and BIRC3 N-terminus; a single BIRC2 or BIRC3 molecule interacts with a heterotrimer formed by TRAF1 and TRAF2. Interacts with NFATC2IP, TRAFD1 and with HIVEP3. Interacts with MAP3K14. Interacts with GPS2. In terms of processing, polyubiquitinated by BIRC2 and/or BIRC3, leading to its subsequent proteasomal degradation. Ubiquitinated by the SCF(FBXL2) complex, leading to its degradation by the proteasome.

In terms of biological role, adapter molecule that regulates the activation of NF-kappa-B and JNK. Plays a role in the regulation of cell survival and apoptosis. The heterotrimer formed by TRAF1 and TRAF2 is part of a E3 ubiquitin-protein ligase complex that promotes ubiquitination of target proteins, such as MAP3K14. The TRAF1/TRAF2 complex recruits the antiapoptotic E3 protein-ubiquitin ligases BIRC2 and BIRC3 to TNFRSF1B/TNFR2. This chain is TNF receptor-associated factor 1 (TRAF1), found in Homo sapiens (Human).